Here is a 316-residue protein sequence, read N- to C-terminus: Small ribosomal subunit biogenesis GTPase RsgA (316 aa).

Residues Asp-83 to Phe-248 form the CP-type G domain. Residues Asn-131–Asp-134 and Gly-185–Thr-193 each bind GTP. Zn(2+) contacts are provided by Cys-272, Cys-277, His-279, and Cys-285.

This sequence belongs to the TRAFAC class YlqF/YawG GTPase family. RsgA subfamily. Monomer. Associates with 30S ribosomal subunit, binds 16S rRNA. Zn(2+) serves as cofactor.

The protein localises to the cytoplasm. Functionally, one of several proteins that assist in the late maturation steps of the functional core of the 30S ribosomal subunit. Helps release RbfA from mature subunits. May play a role in the assembly of ribosomal proteins into the subunit. Circularly permuted GTPase that catalyzes slow GTP hydrolysis, GTPase activity is stimulated by the 30S ribosomal subunit. The chain is Small ribosomal subunit biogenesis GTPase RsgA from Paraburkholderia xenovorans (strain LB400).